Consider the following 92-residue polypeptide: MPRSLKKGPFVDEHLLAKVDAQNEKGNKNVIKTWSRRSTILPDFIGHTFAVHDGRKHVPVFIDDSMVGHKLGEFAPTKTFKGHVKDDKKGRR.

It belongs to the universal ribosomal protein uS19 family.

Protein S19 forms a complex with S13 that binds strongly to the 16S ribosomal RNA. This Corynebacterium jeikeium (strain K411) protein is Small ribosomal subunit protein uS19.